The chain runs to 387 residues: O-phospho-L-seryl-tRNA:Cys-tRNA synthase 2 (387 aa).

Pyridoxal 5'-phosphate is bound by residues 89–90, Asn-196, and 219–221; these read AR and SGH. Lys-222 carries the post-translational modification N6-(pyridoxal phosphate)lysine.

It belongs to the SepCysS family. Homodimer. Interacts with SepRS. Pyridoxal 5'-phosphate serves as cofactor.

It catalyses the reaction O-phospho-L-seryl-tRNA(Cys) + hydrogen sulfide + H(+) = L-cysteinyl-tRNA(Cys) + phosphate. Functionally, converts O-phospho-L-seryl-tRNA(Cys) (Sep-tRNA(Cys)) to L-cysteinyl-tRNA(Cys) (Cys-tRNA(Cys)). The chain is O-phospho-L-seryl-tRNA:Cys-tRNA synthase 2 from Methanococcoides burtonii (strain DSM 6242 / NBRC 107633 / OCM 468 / ACE-M).